The chain runs to 256 residues: Protein FixA (256 aa).

It belongs to the ETF beta-subunit/FixA family. Heterodimer of FixA and FixB.

It functions in the pathway amine and polyamine metabolism; carnitine metabolism. Functionally, required for anaerobic carnitine reduction. May bring reductant to CaiA. This Escherichia fergusonii (strain ATCC 35469 / DSM 13698 / CCUG 18766 / IAM 14443 / JCM 21226 / LMG 7866 / NBRC 102419 / NCTC 12128 / CDC 0568-73) protein is Protein FixA.